The primary structure comprises 311 residues: Deacetoxycephalosporin C synthase (311 aa).

The Fe2OG dioxygenase domain maps to 154–267; it reads DCEPLLRFRY…RTSSVFFLRP (114 aa).

It belongs to the iron/ascorbate-dependent oxidoreductase family. It depends on Fe cation as a cofactor. L-ascorbate serves as cofactor.

The enzyme catalyses penicillin N + 2-oxoglutarate + O2 = deacetoxycephalosporin C + succinate + CO2 + H2O. It functions in the pathway antibiotic biosynthesis; cephalosporin C biosynthesis. Its function is as follows. Catalyzes the step from penicillin N to deacetoxy-cephalosporin C. The protein is Deacetoxycephalosporin C synthase (cefE) of Streptomyces clavuligerus.